The following is a 322-amino-acid chain: Probable ATP-dependent 6-phosphofructokinase (322 aa).

ATP is bound by residues Gly11, 72 to 73, and 102 to 105; these read RF and GDGS. Mg(2+) is bound at residue Asp103. Substrate-binding positions include 125 to 127, 169 to 171, Glu222, Lys249, and 255 to 258; these read TID, MGR, and YLQR. The Proton acceptor role is filled by Asp127.

The protein belongs to the phosphofructokinase type A (PFKA) family. Homotetramer. The cofactor is Mg(2+).

The protein localises to the cytoplasm. It carries out the reaction beta-D-fructose 6-phosphate + ATP = beta-D-fructose 1,6-bisphosphate + ADP + H(+). The protein operates within carbohydrate degradation; glycolysis; D-glyceraldehyde 3-phosphate and glycerone phosphate from D-glucose: step 3/4. In terms of biological role, catalyzes the phosphorylation of D-fructose 6-phosphate to fructose 1,6-bisphosphate by ATP, the first committing step of glycolysis. This chain is Probable ATP-dependent 6-phosphofructokinase (pfkA), found in Malacoplasma penetrans (strain HF-2) (Mycoplasma penetrans).